A 1141-amino-acid chain; its full sequence is DNA polymerase 120R (1141 aa).

This sequence belongs to the DNA polymerase type-B family.

It catalyses the reaction DNA(n) + a 2'-deoxyribonucleoside 5'-triphosphate = DNA(n+1) + diphosphate. Its function is as follows. DNA-directed DNA polymerase involved in viral DNA replication. In Invertebrate iridescent virus 3 (IIV-3), this protein is DNA polymerase 120R.